Consider the following 247-residue polypeptide: ATP synthase subunit a, chloroplastic (247 aa).

5 helical membrane-spanning segments follow: residues Gln-38–Val-58, Val-95–Leu-115, Ile-134–Ser-154, Leu-199–Leu-219, and Gly-220–Gly-240.

It belongs to the ATPase A chain family. As to quaternary structure, F-type ATPases have 2 components, CF(1) - the catalytic core - and CF(0) - the membrane proton channel. CF(1) has five subunits: alpha(3), beta(3), gamma(1), delta(1), epsilon(1). CF(0) has four main subunits: a, b, b' and c.

The protein localises to the plastid. The protein resides in the chloroplast thylakoid membrane. Key component of the proton channel; it plays a direct role in the translocation of protons across the membrane. In Hordeum vulgare (Barley), this protein is ATP synthase subunit a, chloroplastic.